A 130-amino-acid polypeptide reads, in one-letter code: Small ribosomal subunit protein uS8 (130 aa).

Belongs to the universal ribosomal protein uS8 family. Part of the 30S ribosomal subunit. Contacts proteins S5 and S12.

One of the primary rRNA binding proteins, it binds directly to 16S rRNA central domain where it helps coordinate assembly of the platform of the 30S subunit. The chain is Small ribosomal subunit protein uS8 from Haemophilus ducreyi (strain 35000HP / ATCC 700724).